The chain runs to 277 residues: Formamidopyrimidine-DNA glycosylase (277 aa).

P2 serves as the catalytic Schiff-base intermediate with DNA. The active-site Proton donor is E3. K60 functions as the Proton donor; for beta-elimination activity in the catalytic mechanism. 3 residues coordinate DNA: H94, R113, and R158. Residues 243 to 277 (WVYNRAGEPCKVCGDVIQRIKLGGRSSHFCRQCQV) form an FPG-type zinc finger. R267 acts as the Proton donor; for delta-elimination activity in catalysis.

This sequence belongs to the FPG family. Monomer. The cofactor is Zn(2+).

The enzyme catalyses Hydrolysis of DNA containing ring-opened 7-methylguanine residues, releasing 2,6-diamino-4-hydroxy-5-(N-methyl)formamidopyrimidine.. The catalysed reaction is 2'-deoxyribonucleotide-(2'-deoxyribose 5'-phosphate)-2'-deoxyribonucleotide-DNA = a 3'-end 2'-deoxyribonucleotide-(2,3-dehydro-2,3-deoxyribose 5'-phosphate)-DNA + a 5'-end 5'-phospho-2'-deoxyribonucleoside-DNA + H(+). In terms of biological role, involved in base excision repair of DNA damaged by oxidation or by mutagenic agents. Acts as a DNA glycosylase that recognizes and removes damaged bases. Has a preference for oxidized purines, such as 7,8-dihydro-8-oxoguanine (8-oxoG). Has AP (apurinic/apyrimidinic) lyase activity and introduces nicks in the DNA strand. Cleaves the DNA backbone by beta-delta elimination to generate a single-strand break at the site of the removed base with both 3'- and 5'-phosphates. The sequence is that of Formamidopyrimidine-DNA glycosylase from Trichormus variabilis (strain ATCC 29413 / PCC 7937) (Anabaena variabilis).